A 178-amino-acid chain; its full sequence is MTVEELKALIRTVPDFPAPGIQFRDITTLLAHGEGLAATMRHLGEAARLAGAEAIAGMEARGFIFGAGVAVELGLGFLPIRKPGKLPASTIGVDYDLEYGTDRLEIDPGAVEAGQKVVIVDDLIATGGTALAAAKLLRQAGAEVGQALFVIDLPELGGAQRLRDTGITVDSLMAFDGH.

Belongs to the purine/pyrimidine phosphoribosyltransferase family. Homodimer.

The protein localises to the cytoplasm. It catalyses the reaction AMP + diphosphate = 5-phospho-alpha-D-ribose 1-diphosphate + adenine. It functions in the pathway purine metabolism; AMP biosynthesis via salvage pathway; AMP from adenine: step 1/1. Its function is as follows. Catalyzes a salvage reaction resulting in the formation of AMP, that is energically less costly than de novo synthesis. This Erythrobacter litoralis (strain HTCC2594) protein is Adenine phosphoribosyltransferase.